Consider the following 206-residue polypeptide: MKLDITTLDGGSAGSVELNEAIYGLEPRADILQRMVRYQLAKRRAGTHAVKNRSDVDRTSKKLYKQKGTGNARHGAASAPQFRGGGRAFGPVVRDHSHDLPKKVRALALKHALSAKAKASTLIVVDDIKVDNHKTKAMIERFEKLGLSSALIIGGSEVDENFGRAARAIPKIDVLPVQGINVYDILRRDTLVLTRAAVDALEERFK.

The protein belongs to the universal ribosomal protein uL4 family. Part of the 50S ribosomal subunit.

Its function is as follows. One of the primary rRNA binding proteins, this protein initially binds near the 5'-end of the 23S rRNA. It is important during the early stages of 50S assembly. It makes multiple contacts with different domains of the 23S rRNA in the assembled 50S subunit and ribosome. Forms part of the polypeptide exit tunnel. The sequence is that of Large ribosomal subunit protein uL4 from Methylorubrum extorquens (strain CM4 / NCIMB 13688) (Methylobacterium extorquens).